We begin with the raw amino-acid sequence, 516 residues long: BAR/IMD domain-containing adapter protein 2-like 1 (516 aa).

The IMD domain maps to methionine 1–proline 249. Residues methionine 115–glutamine 148 are a coiled coil. A phosphothreonine mark is found at threonine 248 and threonine 257. A phosphoserine mark is found at serine 261 and serine 281. Residues asparagine 303–glutamine 328 form a disordered region. Serine 332 carries the phosphoserine modification. In terms of domain architecture, SH3 spans methionine 340 to glutamate 403. The residue at position 413 (threonine 413) is a Phosphothreonine. Serine 415, serine 421, and serine 423 each carry phosphoserine. The disordered stretch occupies residues alanine 454 to arginine 516. A compositionally biased stretch (polar residues) spans alanine 474–threonine 485. Residues proline 488 to arginine 516 form a binds F-actin region.

As to quaternary structure, interacts with RAC1. Binds to F-actin. Interacts with FASLG. Post-translationally, phosphorylated on tyrosine in response to insulin.

It is found in the cytoplasm. The protein localises to the cytoskeleton. Its function is as follows. May function as adapter protein. Involved in the formation of clusters of actin bundles. Plays a role in the reorganization of the actin cytoskeleton in response to bacterial infection. This Rattus norvegicus (Rat) protein is BAR/IMD domain-containing adapter protein 2-like 1 (Baiap2l1).